The chain runs to 504 residues: Glucose-6-phosphate isomerase (504 aa).

Glutamate 333 acts as the Proton donor in catalysis. Catalysis depends on residues histidine 364 and lysine 473.

The protein belongs to the GPI family.

It localises to the cytoplasm. The catalysed reaction is alpha-D-glucose 6-phosphate = beta-D-fructose 6-phosphate. It participates in carbohydrate biosynthesis; gluconeogenesis. The protein operates within carbohydrate degradation; glycolysis; D-glyceraldehyde 3-phosphate and glycerone phosphate from D-glucose: step 2/4. Functionally, catalyzes the reversible isomerization of glucose-6-phosphate to fructose-6-phosphate. The protein is Glucose-6-phosphate isomerase of Xanthomonas campestris pv. campestris (strain B100).